The following is a 449-amino-acid chain: Guanine nucleotide-binding protein alpha-2 subunit (449 aa).

Residues 1 to 91 (MGLCASSEKN…TATANTSGSQ (91 aa)) form a disordered region. A lipid anchor (N-myristoyl glycine) is attached at glycine 2. Cysteine 4 is lipidated: S-palmitoyl cysteine. 2 stretches are compositionally biased toward polar residues: residues 7–23 (SEKN…SAGS) and 38–48 (QKTVRTVNTAN). Residues 49–59 (QQEKQQQRQQQ) show a composition bias toward low complexity. A compositionally biased stretch (polar residues) spans 72–91 (NGSINNAISPTATANTSGSQ). One can recognise a G-alpha domain in the interval 122-448 (KELKVLLLGA…ENTLKDSGVL (327 aa)). Residues 125–138 (KVLLLGAGESGKST) form a G1 motif region. 14 residues coordinate GTP: glutamate 133, serine 134, glycine 135, lysine 136, serine 137, threonine 138, aspartate 245, leucine 270, threonine 276, glycine 299, asparagine 365, lysine 366, aspartate 368, and alanine 420. Residue serine 137 coordinates Mg(2+). A G2 motif region spans residues 268 to 276 (DILRSRQMT). Threonine 276 contributes to the Mg(2+) binding site. Residues 292 to 301 (MHIYDVGGQR) form a G3 motif region. Positions 361–368 (VLFLNKID) are G4 motif. A G5 motif region spans residues 418–423 (TQATDT).

It belongs to the G-alpha family. G(q) subfamily. As to quaternary structure, g proteins are composed of 3 units; alpha, beta and gamma. The alpha chain contains the guanine nucleotide binding site. GPA2 interacts with the kelch repeat beta-mimic proteins GPB1 and GPB2 and with the gamma subunit GPG1. Interacts with the G protein coupled receptor GPR1. Also interacts with regulators of G protein signaling (RGS) protein RGS2. Mg(2+) is required as a cofactor. In terms of processing, myristoylation at Gly-2 and palmitoylation at Cys-4 are required for membrane localization and function of the protein.

Its subcellular location is the cell membrane. Its activity is regulated as follows. Alternates between an inactive form bound to GDP and an active form bound to GTP. Activated by the G protein coupled receptor (GPCR) GPR1, which serves as a guanine nucleotide-exchange factor (GEF), and inactivated by RGS2, acting as a GTPase-activating protein (GAP) for GPA2. Its function is as follows. Alpha subunit of the heterotrimeric guanine nucleotide-binding protein (G protein) involved in glucose-induced cAMP signaling. Binds to its cognate transmembrane receptor GPR1, which senses extracellular carbon sources, and activates cAMP-PKA signaling and governs diploid pseudohyphal differentiation and haploid invasive growth. The G protein beta-mimic proteins GPB1 and GPB2 inhibit GPA2-GPR1 coupling, probably to reduce signaling in the absence of glucose. In Saccharomyces cerevisiae (strain ATCC 204508 / S288c) (Baker's yeast), this protein is Guanine nucleotide-binding protein alpha-2 subunit (GPA2).